The chain runs to 209 residues: ATP-dependent Clp protease proteolytic subunit (209 aa).

The active-site Nucleophile is the S106. The active site involves H131.

The protein belongs to the peptidase S14 family. As to quaternary structure, fourteen ClpP subunits assemble into 2 heptameric rings which stack back to back to give a disk-like structure with a central cavity, resembling the structure of eukaryotic proteasomes.

It localises to the cytoplasm. It catalyses the reaction Hydrolysis of proteins to small peptides in the presence of ATP and magnesium. alpha-casein is the usual test substrate. In the absence of ATP, only oligopeptides shorter than five residues are hydrolyzed (such as succinyl-Leu-Tyr-|-NHMec, and Leu-Tyr-Leu-|-Tyr-Trp, in which cleavage of the -Tyr-|-Leu- and -Tyr-|-Trp bonds also occurs).. In terms of biological role, cleaves peptides in various proteins in a process that requires ATP hydrolysis. Has a chymotrypsin-like activity. Plays a major role in the degradation of misfolded proteins. In Brucella suis biovar 1 (strain 1330), this protein is ATP-dependent Clp protease proteolytic subunit.